Reading from the N-terminus, the 412-residue chain is Putative competence-damage inducible protein (412 aa).

Belongs to the CinA family.

The polypeptide is Putative competence-damage inducible protein (Clostridium perfringens (strain ATCC 13124 / DSM 756 / JCM 1290 / NCIMB 6125 / NCTC 8237 / Type A)).